Here is a 447-residue protein sequence, read N- to C-terminus: Tubulin beta chain (447 aa).

GTP is bound by residues glutamine 11, glutamate 69, serine 138, glycine 142, threonine 143, glycine 144, asparagine 204, and asparagine 226. Residue glutamate 69 coordinates Mg(2+).

This sequence belongs to the tubulin family. As to quaternary structure, dimer of alpha and beta chains. A typical microtubule is a hollow water-filled tube with an outer diameter of 25 nm and an inner diameter of 15 nM. Alpha-beta heterodimers associate head-to-tail to form protofilaments running lengthwise along the microtubule wall with the beta-tubulin subunit facing the microtubule plus end conferring a structural polarity. Microtubules usually have 13 protofilaments but different protofilament numbers can be found in some organisms and specialized cells. The cofactor is Mg(2+).

The protein resides in the cytoplasm. Its subcellular location is the cytoskeleton. Its function is as follows. Tubulin is the major constituent of microtubules, a cylinder consisting of laterally associated linear protofilaments composed of alpha- and beta-tubulin heterodimers. Microtubules grow by the addition of GTP-tubulin dimers to the microtubule end, where a stabilizing cap forms. Below the cap, tubulin dimers are in GDP-bound state, owing to GTPase activity of alpha-tubulin. This chain is Tubulin beta chain (TUB2), found in Penicillium digitatum (Green mold).